The sequence spans 334 residues: Fructose-1,6-bisphosphatase class 1 (334 aa).

Mg(2+) contacts are provided by glutamate 89, aspartate 112, leucine 114, and aspartate 115. Residues 115-118 (DGSS), asparagine 208, tyrosine 241, and lysine 271 contribute to the substrate site. Residue glutamate 277 coordinates Mg(2+).

It belongs to the FBPase class 1 family. As to quaternary structure, homotetramer. Mg(2+) is required as a cofactor.

The protein localises to the cytoplasm. It catalyses the reaction beta-D-fructose 1,6-bisphosphate + H2O = beta-D-fructose 6-phosphate + phosphate. Its pathway is carbohydrate biosynthesis; gluconeogenesis. The chain is Fructose-1,6-bisphosphatase class 1 from Serratia proteamaculans (strain 568).